The primary structure comprises 81 residues: Sulfur carrier protein TusA (81 aa).

Cysteine 19 (cysteine persulfide intermediate) is an active-site residue.

Belongs to the sulfur carrier protein TusA family. Interacts with IscS.

The protein resides in the cytoplasm. The protein operates within tRNA modification. Its function is as follows. Sulfur carrier protein involved in sulfur trafficking in the cell. Part of a sulfur-relay system required for 2-thiolation during synthesis of 2-thiouridine of the modified wobble base 5-methylaminomethyl-2-thiouridine (mnm(5)s(2)U) in tRNA. Interacts with IscS and stimulates its cysteine desulfurase activity. Accepts an activated sulfur from IscS, which is then transferred to TusD, and thus determines the direction of sulfur flow from IscS to 2-thiouridine formation. Also appears to be involved in sulfur transfer for the biosynthesis of molybdopterin. In Escherichia coli O17:K52:H18 (strain UMN026 / ExPEC), this protein is Sulfur carrier protein TusA.